A 222-amino-acid polypeptide reads, in one-letter code: MATPQSVFVFAICILMITELILASKSYYDILGVPKSASERQIKKAFHKLAMKYHPDKNKSPDAEAKFREIAEAYETLSDANSRKEYDTIGHSAFTNGKGQRGNGSPFEQSFNFNFDDLFKDFNFFGQNQNTRSKKHFENHFHTRQDGSSRQRHHFQEFSFGGGLFDDMFEDMEKMFSFSGFDTTNRHTVQTENRFHGSSKHCRTVTQRRGNMVTTYTDCSGQ.

A signal peptide spans 1-23; that stretch reads MATPQSVFVFAICILMITELILA. A J domain is found at 26–90; the sequence is SYYDILGVPK…NSRKEYDTIG (65 aa). Positions 91–222 are divergent targeting domain; it reads HSAFTNGKGQ…VTTYTDCSGQ (132 aa). At Ser-133 the chain carries Phosphoserine.

As to quaternary structure, interacts with HSPA5/BiP; interaction is direct. Interacts with ERN1/IRE1 (via the luminal region). Interacts with DERL1. In terms of processing, not N-glycosylated.

The protein localises to the endoplasmic reticulum lumen. In terms of biological role, co-chaperone for Hsp70 protein HSPA5/BiP that acts as a key repressor of the ERN1/IRE1-mediated unfolded protein response (UPR). J domain-containing co-chaperones stimulate the ATPase activity of Hsp70 proteins and are required for efficient substrate recognition by Hsp70 proteins. In the unstressed endoplasmic reticulum, interacts with the luminal region of ERN1/IRE1 and selectively recruits HSPA5/BiP: HSPA5/BiP disrupts the dimerization of the active ERN1/IRE1 luminal region, thereby inactivating ERN1/IRE1. Also involved in endoplasmic reticulum-associated degradation (ERAD) of misfolded proteins. Required for survival of B-cell progenitors and normal antibody production. In Mus musculus (Mouse), this protein is DnaJ homolog subfamily B member 9.